The primary structure comprises 306 residues: Ribonuclease Z (306 aa).

Residues His-63, His-65, Asp-67, His-68, His-141, Asp-211, and His-269 each coordinate Zn(2+). The active-site Proton acceptor is the Asp-67.

This sequence belongs to the RNase Z family. In terms of assembly, homodimer. It depends on Zn(2+) as a cofactor.

The catalysed reaction is Endonucleolytic cleavage of RNA, removing extra 3' nucleotides from tRNA precursor, generating 3' termini of tRNAs. A 3'-hydroxy group is left at the tRNA terminus and a 5'-phosphoryl group is left at the trailer molecule.. In terms of biological role, zinc phosphodiesterase, which displays some tRNA 3'-processing endonuclease activity. Probably involved in tRNA maturation, by removing a 3'-trailer from precursor tRNA. This chain is Ribonuclease Z, found in Staphylococcus carnosus (strain TM300).